The chain runs to 58 residues: Temporin-1Th (58 aa).

Residues 1 to 22 form the signal peptide; the sequence is MFTLKKSLLLLFFLGTINLSLC. A propeptide spanning residues 23–46 is cleaved from the precursor; it reads EEERNAEEERRDEPDERDVQVEKR. The tract at residues 25 to 46 is disordered; sequence ERNAEEERRDEPDERDVQVEKR. Position 56 is a leucine amide (L56).

As to expression, expressed by the skin glands.

The protein localises to the secreted. Its function is as follows. Antimicrobial peptide that renders both the outer and inner membrane of bacteria permeable to hydrophobic substances of low molecular mass. This Rana temporaria (European common frog) protein is Temporin-1Th.